A 347-amino-acid chain; its full sequence is Gas vesicle ATPase GvpN (347 aa).

Residues 1–50 are disordered; that stretch reads MTNSSRERKVRGSQIRTSRREKQDKNARNRTEKELTRLENHQTHRTKNGT. Positions 18-42 are enriched in basic and acidic residues; that stretch reads SRREKQDKNARNRTEKELTRLENHQ. 91–98 is an ATP binding site; the sequence is GPTGCGKT.

This sequence belongs to the CbbQ/NirQ/NorQ/GpvN family. As to quaternary structure, forms homodimers, a GvpN-GvpO heterodimer, interacts with GvpC and GvpL, might interact with GvpA.

Its subcellular location is the gas vesicle. It is found in the cytoplasm. It catalyses the reaction ATP + H2O = ADP + phosphate + H(+). In terms of biological role, an ATPase that functions in gas vesicle formation. A minor component of the gas vesicle, also found in soluble extracts. Gas vesicles are hollow, gas filled proteinaceous nanostructures found in some microorganisms. They allow positioning of halobacteria at the optimal depth for growth in the poorly aerated, shallow brine pools of their habitat. Functionally, expression of a 9.5 kb mc-vac DNA fragment containing 2 divergently transcribed regions (gvpD-gvpE-gvpF-gvpG-gvpH-gvpI-gvpJ-gvpK-gvpL-gvpM and gvpA-gvpC-gvpN-gvpO) allows H.volcanii to produce gas vesicles. This is Gas vesicle ATPase GvpN from Haloferax mediterranei (strain ATCC 33500 / DSM 1411 / JCM 8866 / NBRC 14739 / NCIMB 2177 / R-4) (Halobacterium mediterranei).